Here is a 188-residue protein sequence, read N- to C-terminus: Protein GrpE (188 aa).

The interval 1–30 (MTKKTSHHKAEQKEKRAGEESGRESEVLDH) is disordered. A compositionally biased stretch (basic and acidic residues) spans 8–30 (HKAEQKEKRAGEESGRESEVLDH).

Belongs to the GrpE family. Homodimer.

It localises to the cytoplasm. In terms of biological role, participates actively in the response to hyperosmotic and heat shock by preventing the aggregation of stress-denatured proteins, in association with DnaK and GrpE. It is the nucleotide exchange factor for DnaK and may function as a thermosensor. Unfolded proteins bind initially to DnaJ; upon interaction with the DnaJ-bound protein, DnaK hydrolyzes its bound ATP, resulting in the formation of a stable complex. GrpE releases ADP from DnaK; ATP binding to DnaK triggers the release of the substrate protein, thus completing the reaction cycle. Several rounds of ATP-dependent interactions between DnaJ, DnaK and GrpE are required for fully efficient folding. The polypeptide is Protein GrpE (Chlorobium phaeobacteroides (strain BS1)).